A 269-amino-acid polypeptide reads, in one-letter code: NAD kinase (269 aa).

Catalysis depends on Asp45, which acts as the Proton acceptor. NAD(+)-binding positions include 45 to 46 (DG), 122 to 123 (NE), Arg149, Asp151, and Ala186.

This sequence belongs to the NAD kinase family. The cofactor is a divalent metal cation.

It localises to the cytoplasm. The catalysed reaction is NAD(+) + ATP = ADP + NADP(+) + H(+). Functionally, involved in the regulation of the intracellular balance of NAD and NADP, and is a key enzyme in the biosynthesis of NADP. Catalyzes specifically the phosphorylation on 2'-hydroxyl of the adenosine moiety of NAD to yield NADP. This Staphylococcus carnosus (strain TM300) protein is NAD kinase.